We begin with the raw amino-acid sequence, 112 residues long: Large ribosomal subunit protein uL22 (112 aa).

It belongs to the universal ribosomal protein uL22 family. As to quaternary structure, part of the 50S ribosomal subunit.

In terms of biological role, this protein binds specifically to 23S rRNA; its binding is stimulated by other ribosomal proteins, e.g. L4, L17, and L20. It is important during the early stages of 50S assembly. It makes multiple contacts with different domains of the 23S rRNA in the assembled 50S subunit and ribosome. Functionally, the globular domain of the protein is located near the polypeptide exit tunnel on the outside of the subunit, while an extended beta-hairpin is found that lines the wall of the exit tunnel in the center of the 70S ribosome. The chain is Large ribosomal subunit protein uL22 from Anaplasma marginale (strain Florida).